Reading from the N-terminus, the 182-residue chain is Ribosome maturation factor RimM (182 aa).

The PRC barrel domain occupies 103-182 (EDEFYWRELF…RIEVDWDPAF (80 aa)).

Belongs to the RimM family. In terms of assembly, binds ribosomal protein uS19.

The protein resides in the cytoplasm. Its function is as follows. An accessory protein needed during the final step in the assembly of 30S ribosomal subunit, possibly for assembly of the head region. Essential for efficient processing of 16S rRNA. May be needed both before and after RbfA during the maturation of 16S rRNA. It has affinity for free ribosomal 30S subunits but not for 70S ribosomes. The sequence is that of Ribosome maturation factor RimM from Vibrio cholerae serotype O1 (strain ATCC 39315 / El Tor Inaba N16961).